A 383-amino-acid chain; its full sequence is Succinyl-diaminopimelate desuccinylase (383 aa).

Zn(2+) is bound at residue H72. D74 is an active-site residue. D105 lines the Zn(2+) pocket. Catalysis depends on E137, which acts as the Proton acceptor. Residues E138, E167, and H352 each coordinate Zn(2+).

This sequence belongs to the peptidase M20A family. DapE subfamily. As to quaternary structure, homodimer. It depends on Zn(2+) as a cofactor. Co(2+) is required as a cofactor.

It carries out the reaction N-succinyl-(2S,6S)-2,6-diaminopimelate + H2O = (2S,6S)-2,6-diaminopimelate + succinate. Its pathway is amino-acid biosynthesis; L-lysine biosynthesis via DAP pathway; LL-2,6-diaminopimelate from (S)-tetrahydrodipicolinate (succinylase route): step 3/3. Its function is as follows. Catalyzes the hydrolysis of N-succinyl-L,L-diaminopimelic acid (SDAP), forming succinate and LL-2,6-diaminopimelate (DAP), an intermediate involved in the bacterial biosynthesis of lysine and meso-diaminopimelic acid, an essential component of bacterial cell walls. The sequence is that of Succinyl-diaminopimelate desuccinylase from Ehrlichia ruminantium (strain Welgevonden).